The chain runs to 156 residues: Small ribosomal subunit protein uS7c (156 aa).

The protein belongs to the universal ribosomal protein uS7 family. Part of the 30S ribosomal subunit.

The protein resides in the plastid. Its subcellular location is the chloroplast. One of the primary rRNA binding proteins, it binds directly to 16S rRNA where it nucleates assembly of the head domain of the 30S subunit. This Porphyra purpurea (Red seaweed) protein is Small ribosomal subunit protein uS7c (rps7).